Consider the following 174-residue polypeptide: Inactive signal peptidase IA (174 aa).

The Cytoplasmic segment spans residues 1-7; it reads MKKVVKY. The chain crosses the membrane as a helical span at residues 8–28; it reads LISLILAIIIVLFVQTFVIVG. Residues 29–174 lie on the Extracellular side of the membrane; that stretch reads HVIPNNDMSP…FSKWTVQFKS (146 aa).

It belongs to the peptidase S26 family.

It localises to the cell membrane. Its function is as follows. Catalytically inactive. The protein is Inactive signal peptidase IA (spsA) of Staphylococcus aureus (strain COL).